Reading from the N-terminus, the 219-residue chain is Small ribosomal subunit protein uS3 (219 aa).

The KH type-2 domain occupies 38–106 (IREYINVRLK…RVHINILEVK (69 aa)).

This sequence belongs to the universal ribosomal protein uS3 family. In terms of assembly, part of the 30S ribosomal subunit. Forms a tight complex with proteins S10 and S14.

In terms of biological role, binds the lower part of the 30S subunit head. Binds mRNA in the 70S ribosome, positioning it for translation. In Bacillus thuringiensis (strain Al Hakam), this protein is Small ribosomal subunit protein uS3.